Here is a 131-residue protein sequence, read N- to C-terminus: Small ribosomal subunit protein uS11 (131 aa).

Belongs to the universal ribosomal protein uS11 family. In terms of assembly, part of the 30S ribosomal subunit. Interacts with proteins S7 and S18. Binds to IF-3.

Its function is as follows. Located on the platform of the 30S subunit, it bridges several disparate RNA helices of the 16S rRNA. Forms part of the Shine-Dalgarno cleft in the 70S ribosome. This is Small ribosomal subunit protein uS11 from Clostridium acetobutylicum (strain ATCC 824 / DSM 792 / JCM 1419 / IAM 19013 / LMG 5710 / NBRC 13948 / NRRL B-527 / VKM B-1787 / 2291 / W).